Consider the following 235-residue polypeptide: Small ribosomal subunit protein uS10m (235 aa).

Residues 1-19 (MLRTSVRSPLLYRCLSKRF) constitute a mitochondrion transit peptide.

The protein belongs to the universal ribosomal protein uS10 family. In terms of assembly, part of the mitochondrial small ribosomal subunit.

The protein localises to the mitochondrion. In terms of biological role, involved in mitochondrial genome encoded proteins translation. Involved in the binding of tRNA to the ribosomes. The protein is Small ribosomal subunit protein uS10m (RSM10) of Candida glabrata (strain ATCC 2001 / BCRC 20586 / JCM 3761 / NBRC 0622 / NRRL Y-65 / CBS 138) (Yeast).